A 264-amino-acid chain; its full sequence is 3-methyl-2-oxobutanoate hydroxymethyltransferase 1 (264 aa).

Residues D45 and D84 each coordinate Mg(2+). Residues 45 to 46 (DS), D84, and K112 each bind 3-methyl-2-oxobutanoate. Position 114 (E114) interacts with Mg(2+). Catalysis depends on E181, which acts as the Proton acceptor.

It belongs to the PanB family. As to quaternary structure, homodecamer; pentamer of dimers. It depends on Mg(2+) as a cofactor.

The protein localises to the cytoplasm. The enzyme catalyses 3-methyl-2-oxobutanoate + (6R)-5,10-methylene-5,6,7,8-tetrahydrofolate + H2O = 2-dehydropantoate + (6S)-5,6,7,8-tetrahydrofolate. It participates in cofactor biosynthesis; (R)-pantothenate biosynthesis; (R)-pantoate from 3-methyl-2-oxobutanoate: step 1/2. Catalyzes the reversible reaction in which hydroxymethyl group from 5,10-methylenetetrahydrofolate is transferred onto alpha-ketoisovalerate to form ketopantoate. The sequence is that of 3-methyl-2-oxobutanoate hydroxymethyltransferase 1 from Aliivibrio fischeri (strain ATCC 700601 / ES114) (Vibrio fischeri).